Reading from the N-terminus, the 187-residue chain is Ribosome-recycling factor (187 aa).

It belongs to the RRF family.

It localises to the cytoplasm. In terms of biological role, responsible for the release of ribosomes from messenger RNA at the termination of protein biosynthesis. May increase the efficiency of translation by recycling ribosomes from one round of translation to another. The sequence is that of Ribosome-recycling factor from Lactiplantibacillus plantarum (strain ATCC BAA-793 / NCIMB 8826 / WCFS1) (Lactobacillus plantarum).